The chain runs to 366 residues: MNYEKWRHPPVSLVESVKASRAVYKRLGNSGLVVSNPILGGMHIGNPKWNDWVLDEKESIALLKAAYERGVNTWDTANMYSNGESEKIMGKALRVHNIPRSKVVIMTKCCRAVTDPNIEPDIGISTAFYPELSGQSKDYVNHFGLSRASIFQQVEASLQRLNTDYIDVLQIHRFDPEVPPEETMKALHDLVQMNKVRYLGASSMWAHEFAILQHAAEKNNWTKFVSMQNHYSLLYREEEREMIKYCNLTGVGVISWGSLASGRLARPPDQRTVSPRGVNGTIYKDYNPTQSEEIIRRVHQTAVSRGIPMSQVALAWLNKRIVAPVIGLSSVERIDEALDAKAVELSHEEERYLESAYRAQSIQGHA.

D75 is an NADP(+) binding site. Y80 acts as the Proton donor in catalysis. H172 serves as a coordination point for substrate. NADP(+) contacts are provided by residues 202–203 (SS), Q228, 257–267 (GSLASGRLARP), and 329–337 (SSVERIDEA).

The protein belongs to the aldo/keto reductase family.

Its pathway is mycotoxin biosynthesis. Its function is as follows. Aldo-keto reductase; part of the gene clusters that mediate the biosynthesis of the host-selective toxins (HSTs) AF-toxins responsible for Alternaria black spot of strawberry disease by the strawberry pathotype. AF-toxin I and III are valine derivatives of 2,3-dyhydroxy-isovaleric acid and 2-hydroxy-isovaleric acid respectively, while AF II is an isoleucine derivative of 2-hydroxy-valeric acid. These derivatives are bound to a 9,10-epoxy-8-hydroxy-9-methyl-decatrienoic acid (EDA) moiety. On cellular level, AF-toxins affect plasma membrane of susceptible cells and cause a sudden increase in loss of K(+) after a few minutes of toxin treatment. The aldo-keto reductase AFTS1 catalyzes the conversion of 2-keto-isovaleric acid (2-KIV) to 2-hydroxy-isovaleric acid (2-HIV) by reduction of its ketone to an alcohol. The acyl-CoA ligase AFT1, the hydrolase AFT2 and the enoyl-CoA hydratases AFT3 and AFT6, but also the polyketide synthase AFT9, the acyl-CoA dehydrogenase AFT10, the cytochrome P450 monooxygenase AFT11 and the oxidoreductase AFT12 are all involved in the biosynthesis of the AK-, AF- and ACT-toxin common EDA structural moiety. The exact function of each enzyme, and of additional enzymes identified within the AF-toxin clusters have still to be determined. In Alternaria alternata (Alternaria rot fungus), this protein is Aldo-keto reductase AFTS1.